The primary structure comprises 208 residues: Protein JLP2 (208 aa).

Residues 185–194 (AKKNQKKKNK) show a composition bias toward basic residues. Residues 185–208 (AKKNQKKKNKQSKDEVTDDMQLEV) form a disordered region.

The protein belongs to the CCDC25 family.

The protein resides in the cytoplasm. This Saccharomyces cerevisiae (strain ATCC 204508 / S288c) (Baker's yeast) protein is Protein JLP2 (JLP2).